The chain runs to 161 residues: Nucleotide-binding protein Geob_0921 (161 aa).

The protein belongs to the YajQ family.

Functionally, nucleotide-binding protein. This chain is Nucleotide-binding protein Geob_0921, found in Geotalea daltonii (strain DSM 22248 / JCM 15807 / FRC-32) (Geobacter daltonii).